A 577-amino-acid chain; its full sequence is Guanine nucleotide-binding protein-like 3-like protein (577 aa).

A compositionally biased stretch (basic residues) spans 1–30 (MMKIRHKNKKPGKGSKGCKKPARQNGKKVT). The disordered stretch occupies residues 1–75 (MMKIRHKNKK…VAREQERQRH (75 aa)). The required for nucleolar localization stretch occupies residues 9–28 (KKPGKGSKGCKKPARQNGKK). Basic and acidic residues predominate over residues 42–75 (GNDHASREAELKKKRVEEMREKQQVAREQERQRH). A coiled-coil region spans residues 43 to 103 (NDHASREAEL…QKEEVLQELN (61 aa)). A CP-type G domain is found at 118–304 (YKEFRKVVEY…LLDAPGIVPG (187 aa)). GTP is bound by residues 166 to 169 (NKID), 253 to 260 (GLPNVGKS), and 297 to 300 (DAPG).

This sequence belongs to the TRAFAC class YlqF/YawG GTPase family. Interacts with MDM2; this interaction, which occurs in the nucleoplasm, stabilizes MDM2. Indirectly interacts with TP53, via MDM2-binding. Interacts with TERF1; this interaction probably occurs in the nucleoplasm and is increased during mitosis, when the nucleolus is disassembled. This binding may promote TERF1 homodimerization. Interacts with TERT.

The protein resides in the nucleus. Its subcellular location is the nucleolus. In terms of biological role, stabilizes TERF1 telomeric association by preventing TERF1 recruitment by PML. Stabilizes TERF1 protein by preventing its ubiquitination and hence proteasomal degradation. Does so by interfering with TERF1-binding to FBXO4 E3 ubiquitin-protein ligase. Required for cell proliferation. By stabilizing TRF1 protein during mitosis, promotes metaphase-to-anaphase transition. Stabilizes MDM2 protein by preventing its ubiquitination, and hence proteasomal degradation. By acting on MDM2, may affect TP53 activity. Required for normal processing of ribosomal pre-rRNA. Binds GTP. The sequence is that of Guanine nucleotide-binding protein-like 3-like protein (Gnl3l) from Mus musculus (Mouse).